The chain runs to 1213 residues: DNA-directed RNA polymerase subunit beta' (1213 aa).

4 residues coordinate Zn(2+): Cys60, Cys62, Cys75, and Cys78. The Mg(2+) site is built by Asp450, Asp452, and Asp454. Positions 819, 893, 900, and 903 each coordinate Zn(2+).

Belongs to the RNA polymerase beta' chain family. The RNAP catalytic core consists of 2 alpha, 1 beta, 1 beta' and 1 omega subunit. When a sigma factor is associated with the core the holoenzyme is formed, which can initiate transcription. Mg(2+) is required as a cofactor. Requires Zn(2+) as cofactor.

The enzyme catalyses RNA(n) + a ribonucleoside 5'-triphosphate = RNA(n+1) + diphosphate. Its function is as follows. DNA-dependent RNA polymerase catalyzes the transcription of DNA into RNA using the four ribonucleoside triphosphates as substrates. This is DNA-directed RNA polymerase subunit beta' from Streptococcus pyogenes serotype M6 (strain ATCC BAA-946 / MGAS10394).